The sequence spans 500 residues: MSEVSEVRVRFCPSPTGTPHVGMVRTALFNWAYARHTGGKLVFRIEDTDAKRDSEESYQAIIDSLKWLNLGWDEGIEVGGPHEPYRQSQRMDIYADVLEKLKESGDVYPAYSTNEEVQARHKAAGRDPQLGYDNYDRDLTEEQIAQFKAEGREPVWRLRMPDNRIYEWHDLVRGDMSVDGKTVPDFVVARSNGQPLYTLVNPVDDALMEITHVLRGEDLLPSTPRQIALYEALVRVGVAKQVPTFGHLPFVMGEGNKKLSKRDPESNLFNHRDNGIIPEGMLNYLSLLGWSLSADEDIFTMQQLIDNFDVADVKPNPARFDQKKLEAINADHIRMLELGDFTERLRAYLEEYKGFPADYPADKFAFAAELVQTRIKTLSDADGLLRFLITSDADLSLDEKAARKNLKEDAVEVLEVAIAQLEAIADGEFKTDVIEKALQSKLIEEMELKPRKAYGALRVAISGAAVSPPLFESMELLGKESTLARLRAAREQTPFAPAQQ.

A 'HIGH' region motif is present at residues 13-23 (PSPTGTPHVGM). Residues 258–262 (KLSKR) carry the 'KMSKS' region motif. Lys261 is an ATP binding site.

This sequence belongs to the class-I aminoacyl-tRNA synthetase family. Glutamate--tRNA ligase type 1 subfamily. In terms of assembly, monomer.

It is found in the cytoplasm. The catalysed reaction is tRNA(Glu) + L-glutamate + ATP = L-glutamyl-tRNA(Glu) + AMP + diphosphate. Functionally, catalyzes the attachment of glutamate to tRNA(Glu) in a two-step reaction: glutamate is first activated by ATP to form Glu-AMP and then transferred to the acceptor end of tRNA(Glu). This chain is Glutamate--tRNA ligase, found in Corynebacterium jeikeium (strain K411).